We begin with the raw amino-acid sequence, 301 residues long: Radial spoke head 1 homolog (301 aa).

Positions 1–20 (MSDLGSEELEEEGENDLGEY) are enriched in acidic residues. Residues 1-41 (MSDLGSEELEEEGENDLGEYEGERNEVGERHGHGKARLPNG) form a disordered region. MORN repeat units lie at residues 20–43 (YEGE…NGDT), 44–66 (YEGS…NGAR), 67–89 (YTGD…DGSR), 90–112 (YEGE…NNDT), 113–135 (YTGE…ETGS), and 159–181 (YQGK…IGCE). Positions 21 to 31 (EGERNEVGERH) are enriched in basic and acidic residues. Positions 225–301 (LSEEQPPPEG…FDEEPSDLQD (77 aa)) are disordered. A compositionally biased stretch (acidic residues) spans 249–261 (PSEDIQAEGFEGE). The span at 262 to 278 (LEPRGADEDVDTFRQES) shows a compositional bias: basic and acidic residues. Over residues 279–290 (QENSYDIDQGNL) the composition is skewed to polar residues. Over residues 292-301 (FDEEPSDLQD) the composition is skewed to acidic residues.

As to quaternary structure, component of the axonemal radial spoke 1 (RS1) and 2 (RS2) complexes, at least composed of spoke head proteins RSPH1, RSPH3, RSPH9 and the cilia-specific component RSPH4A or sperm-specific component RSPH6A, spoke stalk proteins RSPH14, DNAJB13, DYDC1, ROPN1L and NME5, and the RS1 complex-specific anchor protein IQUB. Interacts with RSPH3B. Interacts with RSPH4A. Interacts with RSPH6A. Expressed in the trachea, ependymal cells, oviduct and ependymal cells (at protein level). Germ cell specific. Specifically expressed in testis, and to a lower extent in ovary. Not expressed in somatic tissues.

The protein resides in the cytoplasm. It localises to the chromosome. The protein localises to the cytoskeleton. Its subcellular location is the cilium axoneme. It is found in the flagellum axoneme. Its function is as follows. Functions as part of axonemal radial spoke complexes that play an important part in the motility of sperm and cilia. The polypeptide is Radial spoke head 1 homolog (Rsph1) (Mus musculus (Mouse)).